The chain runs to 303 residues: tRNA dimethylallyltransferase (303 aa).

16-23 (GPTASGKS) contacts ATP. 18 to 23 (TASGKS) provides a ligand contact to substrate. The tract at residues 41–44 (DSMQ) is interaction with substrate tRNA. Residues 141–161 (AEALHGELSARDPETAGRVRP) form a disordered region. An interaction with substrate tRNA region spans residues 165-169 (QRIVR).

This sequence belongs to the IPP transferase family. In terms of assembly, monomer. Mg(2+) is required as a cofactor.

The catalysed reaction is adenosine(37) in tRNA + dimethylallyl diphosphate = N(6)-dimethylallyladenosine(37) in tRNA + diphosphate. Functionally, catalyzes the transfer of a dimethylallyl group onto the adenine at position 37 in tRNAs that read codons beginning with uridine, leading to the formation of N6-(dimethylallyl)adenosine (i(6)A). The protein is tRNA dimethylallyltransferase of Rhizobium meliloti (strain 1021) (Ensifer meliloti).